Reading from the N-terminus, the 303-residue chain is 4-diphosphocytidyl-2-C-methyl-D-erythritol kinase (303 aa).

Residue lysine 24 is part of the active site. Residue 111-121 (PIASGIGGGSA) coordinates ATP. Aspartate 153 is a catalytic residue.

Belongs to the GHMP kinase family. IspE subfamily.

The catalysed reaction is 4-CDP-2-C-methyl-D-erythritol + ATP = 4-CDP-2-C-methyl-D-erythritol 2-phosphate + ADP + H(+). Its pathway is isoprenoid biosynthesis; isopentenyl diphosphate biosynthesis via DXP pathway; isopentenyl diphosphate from 1-deoxy-D-xylulose 5-phosphate: step 3/6. Catalyzes the phosphorylation of the position 2 hydroxy group of 4-diphosphocytidyl-2C-methyl-D-erythritol. The protein is 4-diphosphocytidyl-2-C-methyl-D-erythritol kinase of Rhizobium johnstonii (strain DSM 114642 / LMG 32736 / 3841) (Rhizobium leguminosarum bv. viciae).